The chain runs to 481 residues: Glutamyl-tRNA(Gln) amidotransferase subunit A (481 aa).

Active-site charge relay system residues include lysine 74 and serine 149. Serine 173 functions as the Acyl-ester intermediate in the catalytic mechanism.

The protein belongs to the amidase family. GatA subfamily. Heterotrimer of A, B and C subunits.

The enzyme catalyses L-glutamyl-tRNA(Gln) + L-glutamine + ATP + H2O = L-glutaminyl-tRNA(Gln) + L-glutamate + ADP + phosphate + H(+). Its function is as follows. Allows the formation of correctly charged Gln-tRNA(Gln) through the transamidation of misacylated Glu-tRNA(Gln) in organisms which lack glutaminyl-tRNA synthetase. The reaction takes place in the presence of glutamine and ATP through an activated gamma-phospho-Glu-tRNA(Gln). The chain is Glutamyl-tRNA(Gln) amidotransferase subunit A from Francisella philomiragia subsp. philomiragia (strain ATCC 25017 / CCUG 19701 / FSC 153 / O#319-036).